Here is a 278-residue protein sequence, read N- to C-terminus: MALKHYNPTSPARRGLILVDRSSLWKGSPVKALTEGKNKTGGRNNKGHRTSRGIGGGHKQKYRLVDFKRRKWDMPATVQRIEYDPNRSAFIALVEYEDKTLSYILAPQRLGVGDSIVASRKADVKPGNAMEIGQAPLGTIVHNIELKPSKGGQLARAAGAYAQIVGRDKGMVMIRLNSGEQRYIRSDCMVTVGAVSNSDNANQNFAKAGRNRWLGRRPLTRGVAKNPVDHPHGGGEGRTSGGRHPVTPWGKPTKGARTRSNKATDKFIIRSRHAKKKR.

Disordered stretches follow at residues 32–57 and 221–278; these read ALTE…IGGG and RGVA…KKKR. Residues 269–278 show a composition bias toward basic residues; the sequence is IRSRHAKKKR.

It belongs to the universal ribosomal protein uL2 family. Part of the 50S ribosomal subunit. Forms a bridge to the 30S subunit in the 70S ribosome.

Its function is as follows. One of the primary rRNA binding proteins. Required for association of the 30S and 50S subunits to form the 70S ribosome, for tRNA binding and peptide bond formation. It has been suggested to have peptidyltransferase activity; this is somewhat controversial. Makes several contacts with the 16S rRNA in the 70S ribosome. The sequence is that of Large ribosomal subunit protein uL2 from Zymomonas mobilis subsp. mobilis (strain ATCC 31821 / ZM4 / CP4).